The following is a 159-amino-acid chain: Superoxide dismutase [Cu-Zn] (159 aa).

The Cu cation site is built by histidine 47, histidine 49, and histidine 64. Cysteines 58 and 150 form a disulfide. Residues histidine 64, histidine 72, histidine 81, and aspartate 84 each coordinate Zn(2+). Histidine 121 is a Cu cation binding site.

The protein belongs to the Cu-Zn superoxide dismutase family. The cofactor is Cu cation. Requires Zn(2+) as cofactor.

The protein resides in the cytoplasm. It catalyses the reaction 2 superoxide + 2 H(+) = H2O2 + O2. Its function is as follows. Destroys radicals which are normally produced within the cells and which are toxic to biological systems. This is Superoxide dismutase [Cu-Zn] (SOD) from Haemonchus contortus (Barber pole worm).